The sequence spans 677 residues: Methionine--tRNA ligase (677 aa).

A 'HIGH' region motif is present at residues 15–25 (PYANGSIHLGH). Cysteine 146, cysteine 149, cysteine 159, and cysteine 162 together coordinate Zn(2+). Residues 333 to 337 (KMSKS) carry the 'KMSKS' region motif. Position 336 (lysine 336) interacts with ATP. One can recognise a tRNA-binding domain in the interval 575-677 (DFAKIDLRVA…SGAKPGQQVK (103 aa)).

It belongs to the class-I aminoacyl-tRNA synthetase family. MetG type 1 subfamily. Homodimer. The cofactor is Zn(2+).

It localises to the cytoplasm. The catalysed reaction is tRNA(Met) + L-methionine + ATP = L-methionyl-tRNA(Met) + AMP + diphosphate. Its function is as follows. Is required not only for elongation of protein synthesis but also for the initiation of all mRNA translation through initiator tRNA(fMet) aminoacylation. The protein is Methionine--tRNA ligase of Cronobacter sakazakii (strain ATCC BAA-894) (Enterobacter sakazakii).